Consider the following 1107-residue polypeptide: Ubiquitin-associated protein 2-like (1107 aa).

Methionine 1 carries the N-acetylmethionine modification. The segment at 1 to 33 (MMTSVGTNRARGNWEQPQNQNQTQHKQRPQATA) is disordered. Positions 49 to 89 (DFEEKVKQLIDITGKNQDECVIALHDCNGDVNRAINVLLEG) constitute a UBA domain. The disordered stretch occupies residues 92–229 (DTHSWEMVGK…NTWNNTGHFE (138 aa)). Residues 118–132 (EEGKENRDRDRDYSR) show a composition bias toward basic and acidic residues. Residues 133 to 145 (RRGGPPRRGRGAS) are compositionally biased toward basic residues. Asymmetric dimethylarginine is present on residues arginine 187 and arginine 190. Residues 213–226 (NYGNSSGNTWNNTG) show a composition bias toward low complexity. Phosphoserine is present on residues serine 376, serine 380, and serine 436. The residue at position 445 (threonine 445) is a Phosphothreonine. Disordered regions lie at residues 461–513 (AVAT…KKTS), 550–676 (SDYE…IPSL), and 689–814 (ANQH…LPPG). Residues serine 474, serine 487, serine 490, serine 491, and serine 497 each carry the phosphoserine modification. 2 stretches are compositionally biased toward low complexity: residues 494–505 (QSSSPQPAQQKL) and 554–589 (STPT…SQES). Positions 590–656 (GYQSGPIQST…TQLQTTQSVE (67 aa)) are enriched in polar residues. Phosphoserine occurs at positions 624, 625, 628, and 629. Low complexity predominate over residues 665-675 (SESPSTSSIPS). Residues 689–713 (ANQHSSSLSGLSHTEEIPNTTTTQH) show a composition bias toward polar residues. The span at 714–804 (SSALSTQQNT…STRSSVATTS (91 aa)) shows a compositional bias: low complexity. A phosphoserine mark is found at serine 872 and serine 879. Disordered stretches follow at residues 885 to 921 (FGRG…LNPA) and 1060 to 1107 (QQPH…WGAN). Composition is skewed to low complexity over residues 893-916 (PAPA…TQQT) and 1073-1087 (QDGQ…QTSS). The span at 1088-1107 (IPQKPQTNKSAYNSYSWGAN) shows a compositional bias: polar residues.

Interacts with BMI1. Part of a complex consisting of UBAP2L, BMI1 and RNF2. Interacts with G3BP1 (via NTF2 domain); promoting stress granule formation.

It localises to the nucleus. Its subcellular location is the chromosome. The protein localises to the cytoplasm. It is found in the stress granule. In terms of biological role, recruits the ubiquitination machinery to RNA polymerase II for polyubiquitination, removal and degradation, when the transcription-coupled nucleotide excision repair (TC-NER) machinery fails to resolve DNA damage. Plays an important role in the activity of long-term repopulating hematopoietic stem cells (LT-HSCs). Is a regulator of stress granule assembly, required for their efficient formation. Required for proper brain development and neocortex lamination. This chain is Ubiquitin-associated protein 2-like, found in Mus musculus (Mouse).